Here is a 214-residue protein sequence, read N- to C-terminus: Variable small protein 24 (214 aa).

Positions 1 to 18 are cleaved as a signal peptide; sequence MRKRISAIIMTLFMVFMS. Residue cysteine 19 is the site of N-palmitoyl cysteine attachment. Cysteine 19 carries S-diacylglycerol cysteine lipidation. The segment at 146-172 is disordered; sequence TELGKKDASDDDTKKAIKKDNSDKTKG.

This sequence belongs to the variable small protein (Vsp) family.

Its subcellular location is the cell outer membrane. Functionally, the Vlp and Vsp proteins are antigenically distinct proteins, only one vlp or vsp gene is transcriptionally active at any one time. Switching between these genes is a mechanism of host immune response evasion. The sequence is that of Variable small protein 24 from Borrelia hermsii.